The sequence spans 162 residues: Allophycocyanin subunit beta (162 aa).

Asn-72 is modified (N4-methylasparagine). Position 82 (Cys-82) interacts with (2R,3E)-phycocyanobilin.

It belongs to the phycobiliprotein family. In terms of assembly, heterohexamer of two alpha chains, one alpha-B chain and three beta chains. Contains one covalently linked phycocyanobilin chromophore. The chromophore is added by phycocyanobilin lyase CpcS 1.

Its subcellular location is the cellular thylakoid membrane. Light-harvesting photosynthetic bile pigment-protein from the phycobiliprotein complex. Allophycocyanin has a maximum absorption at approximately 650 to 653 nanometers. This chain is Allophycocyanin subunit beta (apcB), found in Nostoc sp. (strain PCC 7120 / SAG 25.82 / UTEX 2576).